The following is a 232-amino-acid chain: 6-phosphogluconolactonase (232 aa).

Belongs to the glucosamine/galactosamine-6-phosphate isomerase family. 6-phosphogluconolactonase subfamily.

It catalyses the reaction 6-phospho-D-glucono-1,5-lactone + H2O = 6-phospho-D-gluconate + H(+). It participates in carbohydrate degradation; pentose phosphate pathway; D-ribulose 5-phosphate from D-glucose 6-phosphate (oxidative stage): step 2/3. In terms of biological role, hydrolysis of 6-phosphogluconolactone to 6-phosphogluconate. This chain is 6-phosphogluconolactonase (pgl), found in Caulobacter vibrioides (strain ATCC 19089 / CIP 103742 / CB 15) (Caulobacter crescentus).